The following is a 91-amino-acid chain: DNA-directed RNA polymerase subunit Rpo11 (91 aa).

The protein belongs to the archaeal Rpo11/eukaryotic RPB11/RPC19 RNA polymerase subunit family. As to quaternary structure, part of the RNA polymerase complex.

It is found in the cytoplasm. The catalysed reaction is RNA(n) + a ribonucleoside 5'-triphosphate = RNA(n+1) + diphosphate. Its function is as follows. DNA-dependent RNA polymerase (RNAP) catalyzes the transcription of DNA into RNA using the four ribonucleoside triphosphates as substrates. The chain is DNA-directed RNA polymerase subunit Rpo11 from Methanococcoides burtonii (strain DSM 6242 / NBRC 107633 / OCM 468 / ACE-M).